We begin with the raw amino-acid sequence, 223 residues long: Ribose-5-phosphate isomerase A (223 aa).

Substrate is bound by residues 28–31, 81–84, and 94–97; these read TGST, DGAD, and KGGG. E103 (proton acceptor) is an active-site residue. K121 contributes to the substrate binding site.

Belongs to the ribose 5-phosphate isomerase family. Homodimer.

It carries out the reaction aldehydo-D-ribose 5-phosphate = D-ribulose 5-phosphate. It participates in carbohydrate degradation; pentose phosphate pathway; D-ribose 5-phosphate from D-ribulose 5-phosphate (non-oxidative stage): step 1/1. Functionally, catalyzes the reversible conversion of ribose-5-phosphate to ribulose 5-phosphate. This chain is Ribose-5-phosphate isomerase A, found in Janthinobacterium sp. (strain Marseille) (Minibacterium massiliensis).